We begin with the raw amino-acid sequence, 913 residues long: Chitin synthase 1 (913 aa).

The interval Met-1 to Leu-135 is disordered. An N-linked (GlcNAc...) asparagine glycan is attached at Asn-25. Basic and acidic residues predominate over residues Arg-41 to Gly-56. Asn-539 is a glycosylation site (N-linked (GlcNAc...) asparagine). The next 7 helical transmembrane spans lie at Phe-566–Leu-586, Ile-625–Ala-645, Ile-658–Leu-678, Val-712–Leu-732, Ser-740–Phe-760, Thr-840–Asp-860, and Phe-881–Leu-901.

This sequence belongs to the chitin synthase family. Class III subfamily.

The protein resides in the cell membrane. It catalyses the reaction [(1-&gt;4)-N-acetyl-beta-D-glucosaminyl](n) + UDP-N-acetyl-alpha-D-glucosamine = [(1-&gt;4)-N-acetyl-beta-D-glucosaminyl](n+1) + UDP + H(+). Polymerizes chitin, a structural polymer of the cell wall and septum, by transferring the sugar moiety of UDP-GlcNAc to the non-reducing end of the growing chitin polymer. Plays a role in cell wall integrity and is involved in tolerance to hyperosmotic conditions. Required to successfully penetrate the host plants and thus plays a key role in pathogenicity. This Verticillium dahliae (strain VdLs.17 / ATCC MYA-4575 / FGSC 10137) (Verticillium wilt) protein is Chitin synthase 1.